Consider the following 52-residue polypeptide: Ornatin-B (52 aa).

Residues R42–D44 carry the Cell attachment site motif.

It belongs to the ornatin family.

It localises to the secreted. Its function is as follows. Potent inhibitor of fibrinogen interaction with platelet receptors expressed on glycoprotein IIb-IIIa complex. May prevent blood from clotting during either feeding and/or storage of ingested blood. The polypeptide is Ornatin-B (Placobdella ornata (Turtle leech)).